A 543-amino-acid polypeptide reads, in one-letter code: Glucose-6-phosphate isomerase (543 aa).

Glutamate 351 acts as the Proton donor in catalysis. Active-site residues include histidine 382 and lysine 511.

This sequence belongs to the GPI family.

The protein resides in the cytoplasm. The enzyme catalyses alpha-D-glucose 6-phosphate = beta-D-fructose 6-phosphate. The protein operates within carbohydrate biosynthesis; gluconeogenesis. It participates in carbohydrate degradation; glycolysis; D-glyceraldehyde 3-phosphate and glycerone phosphate from D-glucose: step 2/4. Catalyzes the reversible isomerization of glucose-6-phosphate to fructose-6-phosphate. The chain is Glucose-6-phosphate isomerase from Hydrogenovibrio crunogenus (strain DSM 25203 / XCL-2) (Thiomicrospira crunogena).